The following is a 430-amino-acid chain: Dihydrolipoyllysine-residue acetyltransferase component of pyruvate dehydrogenase complex (430 aa).

The Lipoyl-binding domain occupies 2–77 (AFEFRLPDIG…VVGDVIVKID (76 aa)). K43 carries the post-translational modification N6-lipoyllysine. Residues 80–122 (DAEDMQFKGHDDDSSSKEEPAKEEAPAEQAPVATQTEEVDENR) are disordered. Positions 84–104 (MQFKGHDDDSSSKEEPAKEEA) are enriched in basic and acidic residues. One can recognise a Peripheral subunit-binding (PSBD) domain in the interval 125–162 (KAMPSVRKYAREKGVNIKAVSGSGKNGRITKEDVDAYL). The segment at 164–199 (GGAPTASNESAASATSEEVAETPAAPAAVSLEGDFP) is disordered. The segment covering 166–193 (APTASNESAASATSEEVAETPAAPAAVS) has biased composition (low complexity). The active site involves H401.

Belongs to the 2-oxoacid dehydrogenase family. As to quaternary structure, forms a 24-polypeptide structural core with octahedral symmetry. The cofactor is (R)-lipoate.

The catalysed reaction is N(6)-[(R)-dihydrolipoyl]-L-lysyl-[protein] + acetyl-CoA = N(6)-[(R)-S(8)-acetyldihydrolipoyl]-L-lysyl-[protein] + CoA. Its function is as follows. The pyruvate dehydrogenase complex catalyzes the overall conversion of pyruvate to acetyl-CoA and CO(2). It contains multiple copies of three enzymatic components: pyruvate dehydrogenase (E1), dihydrolipoamide acetyltransferase (E2) and lipoamide dehydrogenase (E3). This is Dihydrolipoyllysine-residue acetyltransferase component of pyruvate dehydrogenase complex (pdhC) from Staphylococcus aureus (strain Mu50 / ATCC 700699).